The sequence spans 105 residues: Probable tetrachloroethene reductive dehalogenase membrane anchor protein (105 aa).

3 consecutive transmembrane segments (helical) span residues 3–23, 35–55, and 66–86; these read IYDV…QYGI, IPLQ…LAWG, and AIGM…IITY.

This sequence belongs to the PceB family.

The protein localises to the cell membrane. Functionally, may act as a membrane anchor for the tetrachloroethene reductive dehalogenase PceA. This is Probable tetrachloroethene reductive dehalogenase membrane anchor protein from Desulfitobacterium hafniense (Desulfitobacterium frappieri).